The primary structure comprises 311 residues: Malate dehydrogenase (311 aa).

NAD(+)-binding positions include Gly7–Gly13 and Asp34. Residues Arg81 and Arg87 each coordinate substrate. Residues Asn94 and Ile117–Asn119 each bind NAD(+). The substrate site is built by Asn119 and Arg153. Residue His177 is the Proton acceptor of the active site. Met227 serves as a coordination point for NAD(+).

It belongs to the LDH/MDH superfamily. MDH type 1 family. Homodimer.

It catalyses the reaction (S)-malate + NAD(+) = oxaloacetate + NADH + H(+). Functionally, catalyzes the reversible oxidation of malate to oxaloacetate. In Vibrio atlanticus (strain LGP32) (Vibrio splendidus (strain Mel32)), this protein is Malate dehydrogenase.